The following is a 241-amino-acid chain: Aliphatic sulfonates import ATP-binding protein SsuB (241 aa).

Residues 10–226 enclose the ABC transporter domain; sequence VHLHGFSRSF…RPDHPAFMQL (217 aa). ATP is bound at residue 42-49; that stretch reads GESGSGKT.

Belongs to the ABC transporter superfamily. Aliphatic sulfonates importer (TC 3.A.1.17.2) family. The complex is composed of two ATP-binding proteins (SsuB), two transmembrane proteins (SsuC) and a solute-binding protein (SsuA).

The protein localises to the cell inner membrane. It carries out the reaction ATP + H2O + aliphatic sulfonate-[sulfonate-binding protein]Side 1 = ADP + phosphate + aliphatic sulfonateSide 2 + [sulfonate-binding protein]Side 1.. Its function is as follows. Part of the ABC transporter complex SsuABC involved in aliphatic sulfonates import. Responsible for energy coupling to the transport system. In Delftia acidovorans (Pseudomonas acidovorans), this protein is Aliphatic sulfonates import ATP-binding protein SsuB.